Here is a 205-residue protein sequence, read N- to C-terminus: Guanylate kinase (205 aa).

The Guanylate kinase-like domain maps to 3–183 (GFVLLISGPS…SYEALRAILI (181 aa)). ATP is bound at residue 10–17 (GPSGAGKS).

Belongs to the guanylate kinase family.

The protein localises to the cytoplasm. The enzyme catalyses GMP + ATP = GDP + ADP. In terms of biological role, essential for recycling GMP and indirectly, cGMP. The protein is Guanylate kinase of Campylobacter jejuni (strain RM1221).